Consider the following 82-residue polypeptide: Small ribosomal subunit protein uS17 (82 aa).

The protein belongs to the universal ribosomal protein uS17 family. In terms of assembly, part of the 30S ribosomal subunit.

One of the primary rRNA binding proteins, it binds specifically to the 5'-end of 16S ribosomal RNA. The chain is Small ribosomal subunit protein uS17 from Shewanella piezotolerans (strain WP3 / JCM 13877).